Reading from the N-terminus, the 712-residue chain is Phosphatase and actin regulator 4 (712 aa).

Disordered stretches follow at residues 1 to 22 (MGQA…GQPT) and 90 to 405 (RGLL…EVPK). The RPEL 1 repeat unit spans residues 72-97 (EVLERKISMRKPREELVKRGLLLEDS). Over residues 114-124 (NGHTTLIGSTR) the composition is skewed to polar residues. A phosphoserine mark is found at Ser-125, Ser-127, Ser-140, and Ser-156. The span at 136-152 (ERIASLRKPVPEEEPKK) shows a compositional bias: basic and acidic residues. Residues 198–230 (ATSSGSLARPSSSASTTAITTAPAATMAATNPA) show a composition bias toward low complexity. Positions 233 to 243 (VHSSGPPSQAP) are enriched in polar residues. Residues 245 to 267 (TLPAAPASTHTTATLSLTHTGPA) are compositionally biased toward low complexity. 3 positions are modified to phosphoserine: Ser-282, Ser-303, and Ser-353. Residues 345 to 357 (SEPLLTPSSSPLP) show a composition bias toward low complexity. Positions 358-371 (AHIPPEPPQSPPFP) are enriched in pro residues. Residue Ser-436 is modified to Phosphoserine. Thr-441 bears the Phosphothreonine mark. 7 positions are modified to phosphoserine: Ser-452, Ser-462, Ser-473, Ser-524, Ser-526, Ser-567, and Ser-600. The disordered stretch occupies residues 507–557 (VIPKLPQCLQEEEEGKESDSDSEGPIQYRDEEDEDESHHSALANKVKRKDT). The segment covering 516 to 528 (QEEEEGKESDSDS) has biased composition (acidic residues). RPEL repeat units follow at residues 593-618 (NTLI…QPKN) and 631-656 (RRLT…RFNE). The interval 602-626 (RPTPEELEQRNILQPKNEADRQAEK) is disordered. Ser-638 is subject to Phosphoserine.

The protein belongs to the phosphatase and actin regulator family. In terms of assembly, binds PPP1CA and actin.

The protein localises to the cytoplasm. It is found in the cell projection. It localises to the lamellipodium. Its function is as follows. Regulator of protein phosphatase 1 (PP1) required for neural tube and optic fissure closure, and enteric neural crest cell (ENCCs) migration during development. Acts as an activator of PP1 by interacting with PPP1CA and preventing phosphorylation of PPP1CA at 'Thr-320'. During neural tube closure, localizes to the ventral neural tube and activates PP1, leading to down-regulate cell proliferation within cranial neural tissue and the neural retina. Also acts as a regulator of migration of enteric neural crest cells (ENCCs) by activating PP1, leading to dephosphorylation and subsequent activation of cofilin (COF1 or COF2) and repression of the integrin signaling through the RHO/ROCK pathway. This is Phosphatase and actin regulator 4 (PHACTR4) from Bos taurus (Bovine).